The following is a 187-amino-acid chain: Peptidyl-tRNA hydrolase (187 aa).

A tRNA-binding site is contributed by tyrosine 14. Histidine 19 functions as the Proton acceptor in the catalytic mechanism. Residues tyrosine 63 and asparagine 65 each contribute to the tRNA site.

This sequence belongs to the PTH family. Monomer.

Its subcellular location is the cytoplasm. The enzyme catalyses an N-acyl-L-alpha-aminoacyl-tRNA + H2O = an N-acyl-L-amino acid + a tRNA + H(+). Hydrolyzes ribosome-free peptidyl-tRNAs (with 1 or more amino acids incorporated), which drop off the ribosome during protein synthesis, or as a result of ribosome stalling. Functionally, catalyzes the release of premature peptidyl moieties from peptidyl-tRNA molecules trapped in stalled 50S ribosomal subunits, and thus maintains levels of free tRNAs and 50S ribosomes. In Thermodesulfovibrio yellowstonii (strain ATCC 51303 / DSM 11347 / YP87), this protein is Peptidyl-tRNA hydrolase.